Here is a 192-residue protein sequence, read N- to C-terminus: Protein hunchback (192 aa).

2 disordered regions span residues 16-54 (SHHH…SNTN) and 152-192 (LTPP…KYMA). Positions 17-28 (HHHHHHHAHHSH) are enriched in basic residues. Residues 32 to 41 (SNSNASSPHQ) are compositionally biased toward low complexity. A compositionally biased stretch (basic and acidic residues) spans 173–192 (EPEKEHDLMSNSSEDMKYMA).

It belongs to the hunchback C2H2-type zinc-finger protein family.

The protein resides in the nucleus. Gap class segmentation protein that controls development of head structures. The protein is Protein hunchback (hb) of Drosophila tanythrix (Fruit fly).